Reading from the N-terminus, the 450-residue chain is MVKEYDYIVIGGGSGGIASANRAAMHGAKVILFEGKEVGGTCVNVGCVPKKVMWYGAQVAETLHRYAGEYGFDVTINNFDFATLKANRQAYIDRIHGSFERGFDSNGVERVYEYARFVDPHTVEVAGELYTAPHILIATGGHPLYPNIPGSEYGITSDGFFELDEVPKRTAVIGAGYIAVEVAGVLNALGSDTHLFVRKDRPLRTFDKDIIDVLVDEMAKSGPTLHMHANATEVVKNADDSLTISFDNEETITVDCLIWAVGRAANTSGFGLEKTGVELTERGNIYSDEFENTSVPGIYALGDVTGKLDLTPVAVKAGRQLSERLFNNKVDAKLDYTDVATVVFSHPAIGAIGLTEEKAIAKYGAENIKVYKSSFTPMYTALGDNRQLSTMKLVTLGEDEKIIGLHGIGYGVDEMIQGFSVAIKMGATKADFDNTVAIHPTGSEEFVTMR.

FAD is bound by residues S14, G15, E34, T41, C42, K50, and A115. S14 serves as a coordination point for glutathione. C42 and C47 are joined by a disulfide. Positions 175, 178, 181, 198, 204, and 262 each coordinate NADP(+). D303 is a binding site for FAD. D309 lines the NADP(+) pocket. Position 311 (T311) interacts with FAD. R319 is a binding site for glutathione. NADP(+) is bound at residue V342. H439 provides a ligand contact to FAD. Catalysis depends on H439, which acts as the Proton acceptor.

The protein belongs to the class-I pyridine nucleotide-disulfide oxidoreductase family. Homodimer. Requires FAD as cofactor.

Its subcellular location is the cytoplasm. It catalyses the reaction 2 glutathione + NADP(+) = glutathione disulfide + NADPH + H(+). Catalyzes the reduction of glutathione disulfide (GSSG) to reduced glutathione (GSH). Constitutes the major mechanism to maintain a high GSH:GSSG ratio in the cytosol. The sequence is that of Glutathione reductase (gor) from Streptococcus thermophilus.